A 515-amino-acid polypeptide reads, in one-letter code: MTKRALISVSDKRGIVDLARELKHLGWDIISTGGTRLALEEAGVVTVAIDDVTGFPEMMDGRVKTLHPLIHGGLLARRDIEHHLQAAKQNRIELIDLVVVNLYPFKETICRPDVTYDVAVDMVDIGGPSLLRSAAKNHASVTVVVDPTDYPLVLGELASTGSTSYQTRQSLAAKAFRHTAAYDAVIADYFTRQAGETKPEKLTLTYDLKQSMRYGENPQQAADFYQRALPTTYSIASAKQLNGKELSFNNIRDADAAIRIIRDFKERPTVVALKHMNPCGIGQADDIETAWDFAYAADPVSIFGGIVVLNREVDLATAEKLHAIFLELIIAPGYSKEALAVLTHKKKHLRILELPFAAQEASEIEAEYTGVLGGLLVQNQDVVTESPADWIVVTKRQPNEQEMAALAFAWKTIKYVKSNAIVIANDHMTLGVGPGQTNRIASIRIAIAQATGQLEGAVLASDAFFPFADSIEEIAAAGIKAIIQPGGSIRDSESIAAANQHGITMIFTGVRHFRH.

The 145-residue stretch at 1–145 (MTKRALISVS…KNHASVTVVV (145 aa)) folds into the MGS-like domain.

The protein belongs to the PurH family.

The catalysed reaction is (6R)-10-formyltetrahydrofolate + 5-amino-1-(5-phospho-beta-D-ribosyl)imidazole-4-carboxamide = 5-formamido-1-(5-phospho-D-ribosyl)imidazole-4-carboxamide + (6S)-5,6,7,8-tetrahydrofolate. It catalyses the reaction IMP + H2O = 5-formamido-1-(5-phospho-D-ribosyl)imidazole-4-carboxamide. Its pathway is purine metabolism; IMP biosynthesis via de novo pathway; 5-formamido-1-(5-phospho-D-ribosyl)imidazole-4-carboxamide from 5-amino-1-(5-phospho-D-ribosyl)imidazole-4-carboxamide (10-formyl THF route): step 1/1. It participates in purine metabolism; IMP biosynthesis via de novo pathway; IMP from 5-formamido-1-(5-phospho-D-ribosyl)imidazole-4-carboxamide: step 1/1. The polypeptide is Bifunctional purine biosynthesis protein PurH (Streptococcus equi subsp. equi (strain 4047)).